Consider the following 429-residue polypeptide: S-adenosylmethionine synthase (429 aa).

ATP is bound at residue His-14. Asp-16 is a Mg(2+) binding site. A K(+)-binding site is contributed by Glu-42. Residues Glu-55 and Gln-98 each contribute to the L-methionine site. The interval 98–108 (QSADINRGVDR) is flexible loop. ATP-binding positions include 165–167 (DAK), 252–253 (KF), Asp-261, 267–268 (RK), Ala-284, and Lys-288. Asp-261 is an L-methionine binding site. Residue Lys-292 participates in L-methionine binding.

This sequence belongs to the AdoMet synthase family. In terms of assembly, homotetramer; dimer of dimers. Mg(2+) serves as cofactor. The cofactor is K(+).

It localises to the cytoplasm. The catalysed reaction is L-methionine + ATP + H2O = S-adenosyl-L-methionine + phosphate + diphosphate. It participates in amino-acid biosynthesis; S-adenosyl-L-methionine biosynthesis; S-adenosyl-L-methionine from L-methionine: step 1/1. In terms of biological role, catalyzes the formation of S-adenosylmethionine (AdoMet) from methionine and ATP. The overall synthetic reaction is composed of two sequential steps, AdoMet formation and the subsequent tripolyphosphate hydrolysis which occurs prior to release of AdoMet from the enzyme. This is S-adenosylmethionine synthase from Porphyromonas gingivalis (strain ATCC BAA-308 / W83).